We begin with the raw amino-acid sequence, 278 residues long: Large ribosomal subunit protein uL2 (278 aa).

The interval 225–278 (MNPVDHPHGGGEGRTSGGRHPVTPWGKPTKGKKTRANKATDKYIVRSRHQKKKG) is disordered. Residues 269 to 278 (VRSRHQKKKG) are compositionally biased toward basic residues.

This sequence belongs to the universal ribosomal protein uL2 family. In terms of assembly, part of the 50S ribosomal subunit. Forms a bridge to the 30S subunit in the 70S ribosome.

In terms of biological role, one of the primary rRNA binding proteins. Required for association of the 30S and 50S subunits to form the 70S ribosome, for tRNA binding and peptide bond formation. It has been suggested to have peptidyltransferase activity; this is somewhat controversial. Makes several contacts with the 16S rRNA in the 70S ribosome. In Parvibaculum lavamentivorans (strain DS-1 / DSM 13023 / NCIMB 13966), this protein is Large ribosomal subunit protein uL2.